The chain runs to 818 residues: MSSWRKIYYKLLNLPLKILVKSKLIPTDPITELRLDTTRPILYVLPYHSKADLLALRQQCLEQDLPDPLNLLEIGDTELPSYVFIDNGPRVFRYCAPKQESVKIFHAYLDLHRNNPNLDIQLLPVSVMFGRSPGREGQNAPHLRLLNGIQKFFAILWLGRDSFVRFSNTVSLRYMATEHGTDKTIAHKLARVARMHYSRQRLAAVGPRLPVRQELFNKLLASKAIEKAVSDEARTKKISHEKARQNAINMMEEIAANFSYETVRLSGRVLGWTWNRLYQGINVHNAERIRRLAQDGHELVYAPCHRSHMDYLLLSYVLYHQGLVPPHIAAGINLNFWPAGPIFRRLGAFFIRRTFKGNKLYATIFREYLGELFARGYSVEYFMEGGRSRTGRLLDPKTGTLSMTLQALLRGESRPITIIPIYIGYEHVMEVATYAKELRGATKEKEGFFQMIRGLRKLRNLGQGYVNFGEPIPLIQYLNNHVPSWRDSIDPIEFHRPEWFNPTVNQLSEKIMVNINNTAAANAINLCSTALLASRQRALTREQLLEQLDCYIQLMRNAPYATDVTVPKKTAEELLEHALQMDKFEVDKDSMGDIIILPRDRAVLMTYYRNNIQHLLVLPSLIACIVIHHRRISREALLSQVAIIYPLLKAELFMRYSKTELPEVVNTLINELTRQCLICNKEHGMLVLNPARIRPLQLLAAGIRETLQRYAITLSLLNANPVISRGVLEKESRMLAQRLSVLHGINAPEFFDKAVFTTSVNTLREEGYISDSGNAITANTQELYQVLGELMSPEIRLTIESVSLPPEHNDTEESAREG.

Positions 305 to 310 (HRSHMD) match the HXXXXD motif motif.

Belongs to the GPAT/DAPAT family.

The protein localises to the cell inner membrane. It catalyses the reaction sn-glycerol 3-phosphate + an acyl-CoA = a 1-acyl-sn-glycero-3-phosphate + CoA. It functions in the pathway phospholipid metabolism; CDP-diacylglycerol biosynthesis; CDP-diacylglycerol from sn-glycerol 3-phosphate: step 1/3. This chain is Glycerol-3-phosphate acyltransferase, found in Photorhabdus laumondii subsp. laumondii (strain DSM 15139 / CIP 105565 / TT01) (Photorhabdus luminescens subsp. laumondii).